Reading from the N-terminus, the 208-residue chain is Uracil phosphoribosyltransferase (208 aa).

5-phospho-alpha-D-ribose 1-diphosphate contacts are provided by residues Arg-78, Arg-103, and 130 to 138 (DPMLATGGS). Uracil contacts are provided by residues Ile-193 and 198 to 200 (GDA). A 5-phospho-alpha-D-ribose 1-diphosphate-binding site is contributed by Asp-199.

The protein belongs to the UPRTase family. Mg(2+) is required as a cofactor.

It carries out the reaction UMP + diphosphate = 5-phospho-alpha-D-ribose 1-diphosphate + uracil. The protein operates within pyrimidine metabolism; UMP biosynthesis via salvage pathway; UMP from uracil: step 1/1. With respect to regulation, allosterically activated by GTP. Its function is as follows. Catalyzes the conversion of uracil and 5-phospho-alpha-D-ribose 1-diphosphate (PRPP) to UMP and diphosphate. This is Uracil phosphoribosyltransferase from Aeromonas salmonicida (strain A449).